Here is a 431-residue protein sequence, read N- to C-terminus: 3-phosphoshikimate 1-carboxyvinyltransferase (431 aa).

Positions 23, 24, and 28 each coordinate 3-phosphoshikimate. Residue Lys23 coordinates phosphoenolpyruvate. 2 residues coordinate phosphoenolpyruvate: Gly96 and Arg124. 4 residues coordinate 3-phosphoshikimate: Ser169, Gln171, Asp317, and Lys344. Position 171 (Gln171) interacts with phosphoenolpyruvate. The active-site Proton acceptor is Asp317. Arg348 and Arg390 together coordinate phosphoenolpyruvate.

This sequence belongs to the EPSP synthase family. In terms of assembly, monomer.

The protein localises to the cytoplasm. The enzyme catalyses 3-phosphoshikimate + phosphoenolpyruvate = 5-O-(1-carboxyvinyl)-3-phosphoshikimate + phosphate. It participates in metabolic intermediate biosynthesis; chorismate biosynthesis; chorismate from D-erythrose 4-phosphate and phosphoenolpyruvate: step 6/7. Its function is as follows. Catalyzes the transfer of the enolpyruvyl moiety of phosphoenolpyruvate (PEP) to the 5-hydroxyl of shikimate-3-phosphate (S3P) to produce enolpyruvyl shikimate-3-phosphate and inorganic phosphate. This Syntrophotalea carbinolica (strain DSM 2380 / NBRC 103641 / GraBd1) (Pelobacter carbinolicus) protein is 3-phosphoshikimate 1-carboxyvinyltransferase.